Consider the following 1133-residue polypeptide: Protein TPR3 (1133 aa).

Positions 4–36 (LSRELVFLILQFLDEEKFKETVHKLEQESGFYF) constitute a LisH domain. The 59-residue stretch at 34-92 (FYFNMKYFEDEVINGNWDEVERYLGGFTKVDDNRYSMKIFFEIRKQKYLEALDKHDRSK) folds into the CTLH domain. A disordered region spans residues 287-307 (PTTANPSMDYPSGDSDHVSKR). WD repeat units lie at residues 348 to 388 (SQGS…RLVL), 410 to 449 (DPTV…DIRQ), 455 to 496 (AHVG…KQFT), 499 to 540 (GHEA…SRVD), 543 to 586 (APGH…VKRT), 590 to 629 (FRKR…LLTT), 634 to 673 (GGLP…RLLR), 771 to 810 (MRTS…RNSS), 837 to 875 (NPEE…TMTT), 878 to 918 (PPPP…VKSK), 921 to 960 (GHSK…KLKS), and 1014 to 1053 (ENSS…LQCR). Residues 1099-1133 (ESERKWGNPPPAENGSTSALSTPPNGASSSDQPER) form a disordered region. Over residues 1112 to 1133 (NGSTSALSTPPNGASSSDQPER) the composition is skewed to polar residues.

Tetramer. Interacts with D53. Interacts with MODD and HDAC1. Interacts with WOX1. Interacts with MOF1. In terms of tissue distribution, expressed in panicles, stems, leaves, spikelets and seed endosperm.

In terms of biological role, probable downstream regulator of strigolactones signaling. Functions in a complex with MODD and HDAC1 to down-regulate the histone acetylation level at BZIP46 target genes. BZIP46 is a positive regulator of abscisic acid (ABA) signaling and drought stress tolerance. The polypeptide is Protein TPR3 (Oryza sativa subsp. japonica (Rice)).